Here is a 315-residue protein sequence, read N- to C-terminus: Homoserine O-succinyltransferase (315 aa).

Cys-142 serves as the catalytic Acyl-thioester intermediate. 2 residues coordinate substrate: Lys-163 and Ser-192. His-235 acts as the Proton acceptor in catalysis. Residue Glu-237 is part of the active site. Arg-249 provides a ligand contact to substrate.

Belongs to the MetA family.

The protein localises to the cytoplasm. It catalyses the reaction L-homoserine + succinyl-CoA = O-succinyl-L-homoserine + CoA. Its pathway is amino-acid biosynthesis; L-methionine biosynthesis via de novo pathway; O-succinyl-L-homoserine from L-homoserine: step 1/1. In terms of biological role, transfers a succinyl group from succinyl-CoA to L-homoserine, forming succinyl-L-homoserine. The protein is Homoserine O-succinyltransferase of Tolumonas auensis (strain DSM 9187 / NBRC 110442 / TA 4).